The primary structure comprises 283 residues: Pantothenate synthetase (283 aa).

Position 30–37 (M30–H37) interacts with ATP. H37 acts as the Proton donor in catalysis. Q61 serves as a coordination point for (R)-pantoate. Residue Q61 coordinates beta-alanine. G147 to D150 lines the ATP pocket. Q153 is a binding site for (R)-pantoate. ATP contacts are provided by residues V176 and M184–R187.

Belongs to the pantothenate synthetase family. Homodimer.

The protein resides in the cytoplasm. The enzyme catalyses (R)-pantoate + beta-alanine + ATP = (R)-pantothenate + AMP + diphosphate + H(+). It functions in the pathway cofactor biosynthesis; (R)-pantothenate biosynthesis; (R)-pantothenate from (R)-pantoate and beta-alanine: step 1/1. Its function is as follows. Catalyzes the condensation of pantoate with beta-alanine in an ATP-dependent reaction via a pantoyl-adenylate intermediate. The chain is Pantothenate synthetase from Trichlorobacter lovleyi (strain ATCC BAA-1151 / DSM 17278 / SZ) (Geobacter lovleyi).